A 255-amino-acid polypeptide reads, in one-letter code: Uridylate kinase (255 aa).

Residues M1–R21 are disordered. An ATP-binding site is contributed by K30–G33. Residue G71 coordinates UMP. 2 residues coordinate ATP: G72 and R76. Residues D91 and M152 to T159 each bind UMP. ATP-binding residues include F185 and D188.

It belongs to the UMP kinase family. As to quaternary structure, homohexamer.

The protein localises to the cytoplasm. The catalysed reaction is UMP + ATP = UDP + ADP. The protein operates within pyrimidine metabolism; CTP biosynthesis via de novo pathway; UDP from UMP (UMPK route): step 1/1. Inhibited by UTP. Its function is as follows. Catalyzes the reversible phosphorylation of UMP to UDP. This chain is Uridylate kinase, found in Mycobacterium leprae (strain TN).